The chain runs to 353 residues: Basic membrane protein C (353 aa).

An N-terminal signal peptide occupies residues 1–16 (MFKRFIFITLSLLVFA). Cys-17 carries the N-palmitoyl cysteine lipid modification. A lipid anchor (S-diacylglycerol cysteine) is attached at Cys-17.

The protein belongs to the BMP lipoprotein family. As to quaternary structure, monomer.

The protein resides in the cell inner membrane. Functionally, may be part of an ABC-type nucleoside uptake system involved in the purine salvage pathway. In Borreliella burgdorferi (strain N40) (Borrelia burgdorferi), this protein is Basic membrane protein C (bmpC).